A 1434-amino-acid chain; its full sequence is Protein patched homolog 1 (1434 aa).

The span at 1–13 (MASAGNAAGALGR) shows a compositional bias: low complexity. The interval 1-34 (MASAGNAAGALGRQAGGGRRRRTGGPHRAAPDRD) is disordered. Over 1–86 (MASAGNAAGA…GCYIQKNCGK (86 aa)) the chain is Cytoplasmic. A helical membrane pass occupies residues 87-107 (FLVVGLLIFGAFAVGLKAANL). Residues 108–422 (ETNVEELWVE…LDDILKSFSD (315 aa)) lie on the Extracellular side of the membrane. N127, N298, N335, and N400 each carry an N-linked (GlcNAc...) asparagine glycan. Residues 423–443 (VSVIRVASGYLLMLAYACLTM) form a helical membrane-spanning segment. The 161-residue stretch at 424-584 (SVIRVASGYL…LLIFPAILSM (161 aa)) folds into the SSD domain. Over 444 to 458 (LRWDCSKSQGAVGLA) the chain is Cytoplasmic. Residues 459–479 (GVLLVALSVAAGLGLCSLIGI) traverse the membrane as a helical segment. Topologically, residues 480–487 (SFNAATTQ) are extracellular. Residues 488 to 508 (VLPFLALGVGVDDVFLLAHAF) form a helical membrane-spanning segment. The Cytoplasmic portion of the chain corresponds to 509–533 (SETGQNKRIPFEDRTGECLKRTGAS). A helical membrane pass occupies residues 534-554 (VALTSISNVTAFFMAALIPIP). The Extracellular portion of the chain corresponds to 555 to 563 (ALRAFSLQA). The helical transmembrane segment at 564-584 (AVVVVFNFAMVLLIFPAILSM) threads the bilayer. The Cytoplasmic segment spans residues 585-734 (DLYRREDRRL…HYAPFLLKPK (150 aa)). Residues 735-755 (AKVVVILLFLGLLGVSLYGTT) traverse the membrane as a helical segment. Topologically, residues 756–1013 (RVRDGLDLTD…WEQYISLRHW (258 aa)) are extracellular. N-linked (GlcNAc...) asparagine glycans are attached at residues N861 and N986. Residues 1014–1034 (LLLSISVVLACTFLVCAVFLL) form a helical membrane-spanning segment. The Cytoplasmic portion of the chain corresponds to 1035-1039 (NPWTA). Residues 1040-1060 (GIIVMVLALMTVELFGMMGLI) form a helical membrane-spanning segment. The Extracellular segment spans residues 1061–1069 (GIKLSAVPV). A helical transmembrane segment spans residues 1070–1090 (VILIASVGIGVEFTVHVALAF). Topologically, residues 1091 to 1107 (LTAIGDKNHRAMLALEH) are cytoplasmic. A helical membrane pass occupies residues 1108–1128 (MFAPVLDGAVSTLLGVLMLAG). The Extracellular portion of the chain corresponds to 1129–1140 (SEFDFIVRYFFA). Residues 1141-1161 (VLAILTVLGVLNGLVLLPVLL) form a helical membrane-spanning segment. The Cytoplasmic portion of the chain corresponds to 1162-1434 (SFFGPCPEVS…EERPWGSSSN (273 aa)). Disordered regions lie at residues 1175–1219 (GLNR…TVSG), 1257–1348 (HPDS…SSVP), and 1368–1396 (HPPP…HGVF). At T1181 the chain carries Phosphothreonine. A Phosphoserine modification is found at S1183. The segment covering 1204 to 1213 (SDSSDSEYSS) has biased composition (low complexity). A compositionally biased stretch (basic and acidic residues) spans 1288 to 1297 (PRRDPPREGL). Residues 1335-1348 (PRNPTSTAMGSSVP) show a composition bias toward polar residues. Residue K1413 forms a Glycyl lysine isopeptide (Lys-Gly) (interchain with G-Cter in ubiquitin) linkage.

It belongs to the patched family. Interacts with SNX17. Interacts with IHH. Interacts with G-protein coupled receptor GPR37L1. In terms of processing, glycosylation is necessary for SHH binding. In the absence of Hh ligands, ubiquitination by ITCH at Lys-1413 promotes endocytosis and both proteasomal and lysosomal degradation. Detected in cerebellar Bergmann glia cells (at protein level). In the developing embryo, first detected within the ventral neural tube and later in the somites and limb buds. Expression in the limb buds is restricted to the posterior ectoderm surrounding the zone of polarizing activity. In the adult, expression is seen in brain, lung, liver, kidney and ocular tissues; lower levels in heart, skeletal muscle, and testis.

Its subcellular location is the cell membrane. Acts as a receptor for sonic hedgehog (SHH), indian hedgehog (IHH) and desert hedgehog (DHH). Associates with the smoothened protein (SMO) to transduce the hedgehog's proteins signal. Seems to have a tumor suppressor function, as inactivation of this protein is probably a necessary, if not sufficient step for tumorigenesis. The sequence is that of Protein patched homolog 1 (Ptch1) from Mus musculus (Mouse).